We begin with the raw amino-acid sequence, 428 residues long: Enolase (428 aa).

Gln163 is a binding site for (2R)-2-phosphoglycerate. Glu205 acts as the Proton donor in catalysis. Mg(2+)-binding residues include Asp242, Glu286, and Asp313. (2R)-2-phosphoglycerate contacts are provided by Lys338, Arg367, Ser368, and Lys389. The active-site Proton acceptor is the Lys338.

The protein belongs to the enolase family. Requires Mg(2+) as cofactor.

The protein resides in the cytoplasm. The protein localises to the secreted. It localises to the cell surface. The enzyme catalyses (2R)-2-phosphoglycerate = phosphoenolpyruvate + H2O. Its pathway is carbohydrate degradation; glycolysis; pyruvate from D-glyceraldehyde 3-phosphate: step 4/5. Functionally, catalyzes the reversible conversion of 2-phosphoglycerate (2-PG) into phosphoenolpyruvate (PEP). It is essential for the degradation of carbohydrates via glycolysis. The chain is Enolase from Syntrophus aciditrophicus (strain SB).